The chain runs to 673 residues: Synaptotagmin-like protein 4 (673 aa).

The RabBD domain occupies 4–122; the sequence is ILDLSFLSEM…KATGDWFYDQ (119 aa). The FYVE-type zinc finger occupies 63–105; it reads CARCQEGLGRLIPKSSTCVGCNHLVCRECRVLESNGSWRCKVC. The segment at 184-253 is disordered; that stretch reads FEVPKTRSGK…PGNQNAVCGD (70 aa). Phosphoserine is present on residues Ser202, Ser205, Ser218, Ser222, and Ser275. In terms of domain architecture, C2 1 spans 358 to 480; that stretch reads VTGKIAFSLK…KLDKKLDHCL (123 aa). Ser490 carries the post-translational modification Phosphoserine. In terms of domain architecture, C2 2 spans 509–635; it reads PASKLPVGGD…ISNGEVVDWM (127 aa).

In terms of assembly, part of a ternary complex containing STX1A and RAB27A. Can bind both dominant negative and dominant active mutants of RAB27A. Binds STXBP1, RAB3A, RAB8A and RAB27B. Interacts with MYO5A. As to expression, detected in the pancreatic islet, in particular in insulin-positive beta cells, and in pituitary.

Its subcellular location is the membrane. It is found in the cytoplasmic vesicle. The protein resides in the secretory vesicle membrane. Functionally, modulates exocytosis of dense-core granules and secretion of hormones in the pancreas and the pituitary. Interacts with vesicles containing negatively charged phospholipids in a Ca(2+)-independent manner. The polypeptide is Synaptotagmin-like protein 4 (Sytl4) (Mus musculus (Mouse)).